The following is a 365-amino-acid chain: Hematopoietic SH2 domain-containing protein homolog (365 aa).

An SH2 domain is found at 34 to 125 (WFHGIISRKA…PYNELLTVAC (92 aa)). 2 disordered regions span residues 199–278 (QSTD…QQKP) and 335–365 (AEHP…APGY). Over residues 257–277 (QQITPNTPNEGRTQQKNQQQK) the composition is skewed to polar residues.

In terms of biological role, may be an adapter protein involved in tyrosine kinase signaling. This chain is Hematopoietic SH2 domain-containing protein homolog (hsh2d), found in Danio rerio (Zebrafish).